We begin with the raw amino-acid sequence, 181 residues long: ATP synthase subunit b (181 aa).

Residues 23-43 form a helical membrane-spanning segment; sequence FIHIPTFIYTALNLVILYFIL.

Belongs to the ATPase B chain family. In terms of assembly, F-type ATPases have 2 components, F(1) - the catalytic core - and F(0) - the membrane proton channel. F(1) has five subunits: alpha(3), beta(3), gamma(1), delta(1), epsilon(1). F(0) has three main subunits: a(1), b(2) and c(10-14). The alpha and beta chains form an alternating ring which encloses part of the gamma chain. F(1) is attached to F(0) by a central stalk formed by the gamma and epsilon chains, while a peripheral stalk is formed by the delta and b chains.

The protein localises to the cell membrane. In terms of biological role, f(1)F(0) ATP synthase produces ATP from ADP in the presence of a proton or sodium gradient. F-type ATPases consist of two structural domains, F(1) containing the extramembraneous catalytic core and F(0) containing the membrane proton channel, linked together by a central stalk and a peripheral stalk. During catalysis, ATP synthesis in the catalytic domain of F(1) is coupled via a rotary mechanism of the central stalk subunits to proton translocation. Component of the F(0) channel, it forms part of the peripheral stalk, linking F(1) to F(0). This chain is ATP synthase subunit b, found in Acetivibrio thermocellus (strain ATCC 27405 / DSM 1237 / JCM 9322 / NBRC 103400 / NCIMB 10682 / NRRL B-4536 / VPI 7372) (Clostridium thermocellum).